The sequence spans 354 residues: DNA polymerase IV (354 aa).

The region spanning 3–188 is the UmuC domain; the sequence is VIFVDFDYFF…LDIDEIPGIG (186 aa). Residues Asp-7 and Asp-105 each contribute to the Mg(2+) site. Residue Glu-106 is part of the active site.

This sequence belongs to the DNA polymerase type-Y family. In terms of assembly, monomer. Requires Mg(2+) as cofactor.

It localises to the cytoplasm. It catalyses the reaction DNA(n) + a 2'-deoxyribonucleoside 5'-triphosphate = DNA(n+1) + diphosphate. Its function is as follows. Poorly processive, error-prone DNA polymerase involved in untargeted mutagenesis. Copies undamaged DNA at stalled replication forks, which arise in vivo from mismatched or misaligned primer ends. These misaligned primers can be extended by PolIV. Exhibits no 3'-5' exonuclease (proofreading) activity. May be involved in translesional synthesis. This is DNA polymerase IV from Sulfolobus acidocaldarius (strain ATCC 33909 / DSM 639 / JCM 8929 / NBRC 15157 / NCIMB 11770).